A 529-amino-acid chain; its full sequence is Bifunctional purine biosynthesis protein PurH (529 aa).

In terms of domain architecture, MGS-like spans 1 to 148; sequence MQQRRPIRRA…KNHKDVAIVV (148 aa). Lysine 287 is subject to N6-acetyllysine.

It belongs to the PurH family.

The catalysed reaction is (6R)-10-formyltetrahydrofolate + 5-amino-1-(5-phospho-beta-D-ribosyl)imidazole-4-carboxamide = 5-formamido-1-(5-phospho-D-ribosyl)imidazole-4-carboxamide + (6S)-5,6,7,8-tetrahydrofolate. The enzyme catalyses IMP + H2O = 5-formamido-1-(5-phospho-D-ribosyl)imidazole-4-carboxamide. It functions in the pathway purine metabolism; IMP biosynthesis via de novo pathway; 5-formamido-1-(5-phospho-D-ribosyl)imidazole-4-carboxamide from 5-amino-1-(5-phospho-D-ribosyl)imidazole-4-carboxamide (10-formyl THF route): step 1/1. The protein operates within purine metabolism; IMP biosynthesis via de novo pathway; IMP from 5-formamido-1-(5-phospho-D-ribosyl)imidazole-4-carboxamide: step 1/1. This is Bifunctional purine biosynthesis protein PurH from Escherichia coli O139:H28 (strain E24377A / ETEC).